The chain runs to 362 residues: Putative glutamate--cysteine ligase 2-1 (362 aa).

It belongs to the glutamate--cysteine ligase type 2 family. YbdK subfamily.

It carries out the reaction L-cysteine + L-glutamate + ATP = gamma-L-glutamyl-L-cysteine + ADP + phosphate + H(+). In terms of biological role, ATP-dependent carboxylate-amine ligase which exhibits weak glutamate--cysteine ligase activity. This chain is Putative glutamate--cysteine ligase 2-1, found in Streptomyces avermitilis (strain ATCC 31267 / DSM 46492 / JCM 5070 / NBRC 14893 / NCIMB 12804 / NRRL 8165 / MA-4680).